Here is a 353-residue protein sequence, read N- to C-terminus: Photosystem II protein D1 (353 aa).

N-acetylthreonine is present on Thr-2. Thr-2 is subject to Phosphothreonine. 3 helical membrane-spanning segments follow: residues 29–46 (YIGW…TATS), 118–133 (HFLL…EWEL), and 142–156 (WIAV…AATA). His-118 provides a ligand contact to chlorophyll a. Tyr-126 is a pheophytin a binding site. [CaMn4O5] cluster is bound by residues Asp-170 and Glu-189. Residues 197–218 (FHMLGVAGVFGGSLFSAMHGSL) form a helical membrane-spanning segment. Position 198 (His-198) interacts with chlorophyll a. A quinone is bound by residues His-215 and 264-265 (SF). His-215 is a Fe cation binding site. His-272 provides a ligand contact to Fe cation. Residues 274-288 (FLAAWPVVGIWFTAL) form a helical membrane-spanning segment. Residues His-332, Glu-333, Asp-342, and Ala-344 each coordinate [CaMn4O5] cluster. Positions 345 to 353 (AVEAPSTNG) are excised as a propeptide.

It belongs to the reaction center PufL/M/PsbA/D family. In terms of assembly, PSII is composed of 1 copy each of membrane proteins PsbA, PsbB, PsbC, PsbD, PsbE, PsbF, PsbH, PsbI, PsbJ, PsbK, PsbL, PsbM, PsbT, PsbX, PsbY, PsbZ, Psb30/Ycf12, at least 3 peripheral proteins of the oxygen-evolving complex and a large number of cofactors. It forms dimeric complexes. It depends on The D1/D2 heterodimer binds P680, chlorophylls that are the primary electron donor of PSII, and subsequent electron acceptors. It shares a non-heme iron and each subunit binds pheophytin, quinone, additional chlorophylls, carotenoids and lipids. D1 provides most of the ligands for the Mn4-Ca-O5 cluster of the oxygen-evolving complex (OEC). There is also a Cl(-1) ion associated with D1 and D2, which is required for oxygen evolution. The PSII complex binds additional chlorophylls, carotenoids and specific lipids. as a cofactor. Post-translationally, tyr-161 forms a radical intermediate that is referred to as redox-active TyrZ, YZ or Y-Z. C-terminally processed by CTPA; processing is essential to allow assembly of the oxygen-evolving complex and thus photosynthetic growth.

The protein resides in the plastid. Its subcellular location is the chloroplast thylakoid membrane. It carries out the reaction 2 a plastoquinone + 4 hnu + 2 H2O = 2 a plastoquinol + O2. Its function is as follows. Photosystem II (PSII) is a light-driven water:plastoquinone oxidoreductase that uses light energy to abstract electrons from H(2)O, generating O(2) and a proton gradient subsequently used for ATP formation. It consists of a core antenna complex that captures photons, and an electron transfer chain that converts photonic excitation into a charge separation. The D1/D2 (PsbA/PsbD) reaction center heterodimer binds P680, the primary electron donor of PSII as well as several subsequent electron acceptors. This chain is Photosystem II protein D1, found in Ceratophyllum demersum (Rigid hornwort).